We begin with the raw amino-acid sequence, 740 residues long: E3 ubiquitin-protein ligase DTX3L (740 aa).

An N-acetylalanine modification is found at Ala-2. Position 9 is a phosphoserine (Ser-9). 3 disordered regions span residues 96–119 (NTRP…MHQH), 195–231 (SEQK…KAEQ), and 524–551 (HETP…SEAS). Polar residues-rich tracts occupy residues 98-111 (RPQI…QAET) and 195-205 (SEQKQQFSPSM). The residue at position 202 (Ser-202) is a Phosphoserine. Over residues 206 to 218 (TERKPLSQQERDS) the composition is skewed to basic and acidic residues. 3 positions are modified to phosphoserine: Ser-221, Ser-532, and Ser-539. The RING-type zinc-finger motif lies at 561–600 (CVICMDTISNKKVLPKCKHEFCAPCINKAMSYKPICPTCQ).

The protein belongs to the Deltex family. Homodimer and heterodimer. Can heterodimerize with DTX1, enhancing its ubiquitin ligase activity in vitro. Interacts (via N-terminus) with ADP ribosyltransferase PARP9/BAL1 (via PARP catalytic domain) forming a stable complex; the interaction is required to activate PARP9 but is dispensable for DTX3L catalytic activity. Forms a complex with STAT1 and PARP9 independently of IFNB1 or IFNG-mediated STAT1 'Tyr-701' phosphorylation. Found in a complex with PARP9, STAT1 and H2BC9. Found in a complex with E3 ligase ITCH and ESCRT-0 components HGS and STAM. Interacts (via C-terminus) with ITCH; the interaction is increased upon CXCL12 stimulation and inhibits ITCH catalytic activity; the interaction is direct. Interacts with HGS and STAM; the interaction brings together HGS and STAM and promotes their recruitment to early endosomes. In terms of assembly, (Microbial infection) Interacts with encephalomyocarditis virus (EMCV) C3 protease; the interaction results in C3 protease 'Lys-48'-linked ubiquitination. As to quaternary structure, (Microbial infection) Interacts with human rhinovirus (HRV) C3 protease; the interaction results in C3 protease 'Lys-48'-linked ubiquitination. In terms of processing, autoubiquitinated.

Its subcellular location is the cytoplasm. It is found in the nucleus. It localises to the early endosome membrane. The protein resides in the lysosome membrane. The enzyme catalyses S-ubiquitinyl-[E2 ubiquitin-conjugating enzyme]-L-cysteine + [acceptor protein]-L-lysine = [E2 ubiquitin-conjugating enzyme]-L-cysteine + N(6)-ubiquitinyl-[acceptor protein]-L-lysine.. Its pathway is protein modification; protein ubiquitination. With respect to regulation, binding to PARP9 enhances DTX3L catalytic activity. Its function is as follows. E3 ubiquitin-protein ligase which, in association with ADP-ribosyltransferase PARP9, plays a role in DNA damage repair and in interferon-mediated antiviral responses. Monoubiquitinates several histones, including histone H2A, H2B, H3 and H4. In response to DNA damage, mediates monoubiquitination of 'Lys-91' of histone H4 (H4K91ub1). The exact role of H4K91ub1 in DNA damage response is still unclear but it may function as a licensing signal for additional histone H4 post-translational modifications such as H4 'Lys-20' methylation (H4K20me). PARP1-dependent PARP9-DTX3L-mediated ubiquitination promotes the rapid and specific recruitment of 53BP1/TP53BP1, UIMC1/RAP80, and BRCA1 to DNA damage sites. By monoubiquitinating histone H2B H2BC9/H2BJ and thereby promoting chromatin remodeling, positively regulates STAT1-dependent interferon-stimulated gene transcription and thus STAT1-mediated control of viral replication. Independently of its catalytic activity, promotes the sorting of chemokine receptor CXCR4 from early endosome to lysosome following CXCL12 stimulation by reducing E3 ligase ITCH activity and thus ITCH-mediated ubiquitination of endosomal sorting complex required for transport ESCRT-0 components HGS and STAM. In addition, required for the recruitment of HGS and STAM to early endosomes. In association with PARP9, plays a role in antiviral responses by mediating 'Lys-48'-linked ubiquitination of encephalomyocarditis virus (EMCV) and human rhinovirus (HRV) C3 proteases and thus promoting their proteasomal-mediated degradation. The polypeptide is E3 ubiquitin-protein ligase DTX3L (DTX3L) (Homo sapiens (Human)).